Here is a 220-residue protein sequence, read N- to C-terminus: Fructose-6-phosphate aldolase (220 aa).

K85 acts as the Schiff-base intermediate with substrate in catalysis.

This sequence belongs to the transaldolase family. Type 3A subfamily. As to quaternary structure, homodecamer.

It is found in the cytoplasm. It carries out the reaction beta-D-fructose 6-phosphate = dihydroxyacetone + D-glyceraldehyde 3-phosphate. Functionally, catalyzes the reversible formation of fructose 6-phosphate from dihydroxyacetone and D-glyceraldehyde 3-phosphate via an aldolization reaction. This chain is Fructose-6-phosphate aldolase, found in Salmonella typhi.